The chain runs to 405 residues: MKRPIYLDYAATTPVDPQVAERMMECLTFDGTFGNAASRSHAYGWQAEEKVEYAREQVANLIKADPREIVWTSGATESDNLALKGVAQFYASKGKHIITSKIEHKAVLDPCRELEEQGFEITYLEPEPQTGLITPEMVKAALRPDTILVSLMMVNNEIGTVTDVAAIGELTRANKTFFHVDAAQAAGKVDIDLSTMKIDLMSFSAHKIYGPKGIGALYVRRSPRVRLKAQIHGGGHERGMRSGTLATHQIVGMGEAFELAGKTMHAEQERIRKLRDKLWNGLQDLEQVFLNGHPTQNVANYLNVSFNFVEGESLMMSLKDAAVSSGSACTSATLEPSYVLRALGLSDELAHSSIRFSFGKYTTEEDIDHVLTITKAAVEKLRELSPLWDMYKEGIDLSTVEWAEH.

Pyridoxal 5'-phosphate is bound by residues 75-76, Asn156, Gln184, and 204-206; these read AT and SAH. Lys207 carries the post-translational modification N6-(pyridoxal phosphate)lysine. Residue Thr244 coordinates pyridoxal 5'-phosphate. The Cysteine persulfide intermediate role is filled by Cys329. Position 329 (Cys329) interacts with [2Fe-2S] cluster.

It belongs to the class-V pyridoxal-phosphate-dependent aminotransferase family. NifS/IscS subfamily. As to quaternary structure, homodimer. Forms a heterotetramer with IscU, interacts with other sulfur acceptors. Pyridoxal 5'-phosphate is required as a cofactor.

It localises to the cytoplasm. The catalysed reaction is (sulfur carrier)-H + L-cysteine = (sulfur carrier)-SH + L-alanine. It functions in the pathway cofactor biosynthesis; iron-sulfur cluster biosynthesis. In terms of biological role, master enzyme that delivers sulfur to a number of partners involved in Fe-S cluster assembly, tRNA modification or cofactor biosynthesis. Catalyzes the removal of elemental sulfur atoms from cysteine to produce alanine. Functions as a sulfur delivery protein for Fe-S cluster synthesis onto IscU, an Fe-S scaffold assembly protein, as well as other S acceptor proteins. This chain is Cysteine desulfurase IscS, found in Acinetobacter baumannii (strain AB307-0294).